Reading from the N-terminus, the 325-residue chain is Glutarate 2-hydroxylase (325 aa).

Residues His160, Asp162, and His292 each contribute to the Fe cation site.

This sequence belongs to the glutarate hydroxylase family. As to quaternary structure, homotetramer. The cofactor is Fe(2+).

The catalysed reaction is glutarate + 2-oxoglutarate + O2 = (S)-2-hydroxyglutarate + succinate + CO2. The protein operates within amino-acid degradation. Functionally, acts as an alpha-ketoglutarate-dependent dioxygenase catalyzing hydroxylation of glutarate (GA) to L-2-hydroxyglutarate (L2HG). Functions in a L-lysine degradation pathway that proceeds via cadaverine, glutarate and L-2-hydroxyglutarate. The sequence is that of Glutarate 2-hydroxylase from Escherichia coli (strain 55989 / EAEC).